The sequence spans 128 residues: Small ribosomal subunit protein uS11 (128 aa).

The protein belongs to the universal ribosomal protein uS11 family. In terms of assembly, part of the 30S ribosomal subunit. Interacts with proteins S7 and S18. Binds to IF-3.

Its function is as follows. Located on the platform of the 30S subunit, it bridges several disparate RNA helices of the 16S rRNA. Forms part of the Shine-Dalgarno cleft in the 70S ribosome. The polypeptide is Small ribosomal subunit protein uS11 (Chloroherpeton thalassium (strain ATCC 35110 / GB-78)).